Consider the following 229-residue polypeptide: Large ribosomal subunit protein uL1 (229 aa).

It belongs to the universal ribosomal protein uL1 family. In terms of assembly, part of the 50S ribosomal subunit.

Binds directly to 23S rRNA. The L1 stalk is quite mobile in the ribosome, and is involved in E site tRNA release. Functionally, protein L1 is also a translational repressor protein, it controls the translation of the L11 operon by binding to its mRNA. The chain is Large ribosomal subunit protein uL1 from Clostridium perfringens (strain ATCC 13124 / DSM 756 / JCM 1290 / NCIMB 6125 / NCTC 8237 / Type A).